A 602-amino-acid polypeptide reads, in one-letter code: Elongation factor 4 (602 aa).

Positions 7–189 constitute a tr-type G domain; the sequence is KHIRNFSIVA…AIVDKIPSPQ (183 aa). GTP contacts are provided by residues 19–24 and 136–139; these read DHGKST and NKID.

Belongs to the TRAFAC class translation factor GTPase superfamily. Classic translation factor GTPase family. LepA subfamily.

It localises to the cell membrane. It catalyses the reaction GTP + H2O = GDP + phosphate + H(+). Required for accurate and efficient protein synthesis under certain stress conditions. May act as a fidelity factor of the translation reaction, by catalyzing a one-codon backward translocation of tRNAs on improperly translocated ribosomes. Back-translocation proceeds from a post-translocation (POST) complex to a pre-translocation (PRE) complex, thus giving elongation factor G a second chance to translocate the tRNAs correctly. Binds to ribosomes in a GTP-dependent manner. The chain is Elongation factor 4 from Clostridium kluyveri (strain ATCC 8527 / DSM 555 / NBRC 12016 / NCIMB 10680 / K1).